Here is an 89-residue protein sequence, read N- to C-terminus: Large ribosomal subunit protein bL27 (89 aa).

The disordered stretch occupies residues 1 to 22; the sequence is MAHKKAGGSSRNGRDSESKRLG.

The protein belongs to the bacterial ribosomal protein bL27 family.

This chain is Large ribosomal subunit protein bL27, found in Rhizobium etli (strain CIAT 652).